Reading from the N-terminus, the 99-residue chain is Large ribosomal subunit protein uL23 (99 aa).

It belongs to the universal ribosomal protein uL23 family. Part of the 50S ribosomal subunit. Contacts protein L29, and trigger factor when it is bound to the ribosome.

One of the early assembly proteins it binds 23S rRNA. One of the proteins that surrounds the polypeptide exit tunnel on the outside of the ribosome. Forms the main docking site for trigger factor binding to the ribosome. The chain is Large ribosomal subunit protein uL23 from Azotobacter vinelandii (strain DJ / ATCC BAA-1303).